Reading from the N-terminus, the 174-residue chain is Anthrone oxygenase CPUR_05435 (174 aa).

Helical transmembrane passes span 13-33 (VALASGVFLSGAMFSVSAIMI), 56-76 (YGSVLMPSMSVAIAAVYGFAS), 88-108 (CLAAGALTLAIAPYTWLAMIP), and 140-160 (WVVLHSIRSILPLAGAIMGFT).

It belongs to the anthrone oxygenase family.

It is found in the membrane. It catalyses the reaction emodin anthrone + O2 = emodin + H2O + H(+). In terms of biological role, anthrone oxygenase; part of the ergochrome gene cluster responsible for the typical purple-black color of the ergot sclerotia. The ergochrome gene cluster produces several ergot pigments including the yellow ergochrome secalonic acid and its derivatives, as well as the red anthraquinones endocrocin and clavorubin. The pathway begins with the synthesis of atrochrysone thioester by the polyketide synthase (PKS) CPUR_05437. The atrochrysone carboxyl ACP thioesterase CPUR_05436 then breaks the thioester bond and releases the atrochrysone carboxylic acid from CPUR_05437. The decarboxylase CPUR_05434 then catalyzes the concerted decarboxylation-elimination required to convert atochrysone carboxylic acid into emodin anthrone, which is further oxidized to emodin by the anthrone oxygenase CPUR_05435. Emodin is further modified to yield monodictyphenone via several steps involving CPUR_05427, CPUR_05428, CPUR_05429 and CPUR_05430. The short chain dehydrogenase/reductase CPUR_05418 then catalyzes the C-5 ketoreduction to give the xanthone skeleton of the monomeric units. Ergochromes formation requires further dimerization steps of different xanthone units, probably catalyzed by the cytochrome P450 monooxygenase CPUR_05419. CPUR_05425, CPUR_05426 and CPUR_05431 are unique to Claviceps, thus it is likely that they are involved in further modification of xanthone units or in their dimerization. The yellow ergochromes and the red anthraquinone pigments endocrocin and clavorubin are products from the same PKS derived precursors and the latter are likely shunt products in the pathway of xanthone biosynthesis. It is proposed that atrochrysone carboxylic acid released from the PKS CPUR_05437 can also be converted to endocrocin anthrone which is further oxidized into endocrocin by CPUR_05435. Endocrocin could be then modified to clavorubin, possibly by CPUR_05423 and CPUR_05431. Clavorubin is the principal anthraquinone metabolite produced by the cluster with a much higher yield compared to endocrocin. The polypeptide is Anthrone oxygenase CPUR_05435 (Claviceps purpurea (strain 20.1) (Ergot fungus)).